The following is a 453-amino-acid chain: Validoxylamine A glucosyltransferase (453 aa).

The protein belongs to the glycosyltransferase 2 family. The cofactor is Mn(2+).

It carries out the reaction validoxylamine A + UDP-alpha-D-glucose = validamycin A + UDP + H(+). Its function is as follows. Involved in the biosynthesis of the antifungal agent validamycin A. Catalyzes the final attachment of glucose from UDP-alpha-D-glucose to validoxylamine A to yield validamycin A. This chain is Validoxylamine A glucosyltransferase, found in Streptomyces hygroscopicus subsp. limoneus.